We begin with the raw amino-acid sequence, 1183 residues long: DNA-directed RNA polymerase subunit beta (1183 aa).

Belongs to the RNA polymerase beta chain family. As to quaternary structure, the RNAP catalytic core consists of 2 alpha, 1 beta, 1 beta' and 1 omega subunit. When a sigma factor is associated with the core the holoenzyme is formed, which can initiate transcription.

It catalyses the reaction RNA(n) + a ribonucleoside 5'-triphosphate = RNA(n+1) + diphosphate. Functionally, DNA-dependent RNA polymerase catalyzes the transcription of DNA into RNA using the four ribonucleoside triphosphates as substrates. This chain is DNA-directed RNA polymerase subunit beta, found in Staphylococcus aureus (strain JH9).